The sequence spans 901 residues: HTH-type transcriptional regulator MalT (901 aa).

39–46 (SPAGYGKT) provides a ligand contact to ATP. The region spanning 829–894 (ELIRTSPLTQ…DAVQHAQQLL (66 aa)) is the HTH luxR-type domain. Residues 853–872 (NDQIAGELDVAATTIKTHIR) constitute a DNA-binding region (H-T-H motif).

Belongs to the MalT family. In terms of assembly, monomer in solution. Oligomerizes to an active state in the presence of the positive effectors ATP and maltotriose.

With respect to regulation, activated by ATP and maltotriose, which are both required for DNA binding. Functionally, positively regulates the transcription of the maltose regulon whose gene products are responsible for uptake and catabolism of malto-oligosaccharides. Specifically binds to the promoter region of its target genes, recognizing a short DNA motif called the MalT box. This is HTH-type transcriptional regulator MalT from Cronobacter sakazakii (strain ATCC BAA-894) (Enterobacter sakazakii).